The primary structure comprises 403 residues: Zinc finger CCHC domain-containing protein 3 (403 aa).

A disordered region spans residues 1 to 158 (MATGGGAEEE…PLQDEPAAAA (158 aa)). Composition is skewed to basic and acidic residues over residues 26–38 (ARGE…REKM) and 47–65 (LAEK…REEE). Over residues 67–79 (GGGGGSAGLGGPA) the composition is skewed to gly residues. Basic and acidic residues predominate over residues 95 to 121 (GDPKGRRRDPAGEAVDPRKKKGAAEAG). Low complexity predominate over residues 128-139 (AAAAAMATPARP). Residue tyrosine 201 is modified to Phosphotyrosine. 3 consecutive CCHC-type zinc fingers follow at residues 335–350 (CFKC…SCTQ), 352–368 (RCFR…YCRK), and 372–387 (CNLC…QCPK).

As to quaternary structure, interacts with CGAS. Interacts with RIGI. Interacts with IFIH1/MDA5.

Its subcellular location is the cytoplasm. Nucleic acid-binding protein involved in innate immune response to DNA and RNA viruses. Binds DNA and RNA in the cytoplasm and acts by promoting recognition of viral nucleic acids by virus sensors, such as RIGI, IFIH1/MDA5 and CGAS. Acts as a co-sensor for recognition of double-stranded DNA (dsDNA) by cGAS in the cytoplasm, thereby playing a role in innate immune response to cytosolic dsDNA and DNA virus. Binds dsDNA and probably acts by promoting sensing of dsDNA by CGAS, leading to enhance CGAS oligomerization and activation. Promotes sensing of viral RNA by RIGI-like receptors proteins RIGI and IFIH1/MDA5 via two mechanisms: binds double-stranded RNA (dsRNA), enhancing the binding of RIGI and IFIH1/MDA5 to dsRNA and promotes 'Lys-63'-linked ubiquitination and subsequent activation of RIGI and IFIH1/MDA5. The polypeptide is Zinc finger CCHC domain-containing protein 3 (Homo sapiens (Human)).